The primary structure comprises 176 residues: MDATAAITGNVDKTQIPPLNQKRILAFVNHFLVSTCTFLNEFALGCETKFVEMERQLQKTEAALIILEAKLASIPTEHHVATEATEAPAISNQQRNEEASMVDTTEPPTTENPTEPELPPESVGVRACEDQRYRKFFKMVQVGVPAPAVKQKMQSEGLEPRILDTPDLILADGQRE.

The stretch at 47–74 (ETKFVEMERQLQKTEAALIILEAKLASI) forms a coiled coil. Disordered stretches follow at residues 84 to 123 (ATEA…PESV) and 152 to 176 (KMQS…GQRE). Positions 104 to 115 (TTEPPTTENPTE) are enriched in low complexity.

Belongs to the CCDC53 family. As to quaternary structure, component of the WASH complex.

The protein resides in the early endosome. Functionally, acts at least in part as component of the WASH complex which may regulate wash nucleation-promoting factor (NPF) activity and is required for its membrane targeting during endosomal sorting. During embryogenesis, not involved in the wash-dependent developmental migration of hemocytes anteriorly from the tail. The sequence is that of WASH complex subunit 3 from Drosophila melanogaster (Fruit fly).